The following is a 146-amino-acid chain: Angiogenin (146 aa).

Residues 1-24 (MVMGLHLLFLVFILGLGLTPPTLA) form the signal peptide. Glutamine 25 carries the post-translational modification Pyrrolidone carboxylic acid. Residue histidine 37 is the Proton acceptor of the active site. Disulfide bonds link cysteine 50–cysteine 105, cysteine 63–cysteine 116, and cysteine 81–cysteine 131. The short motif at 55–59 (RLRNM) is the Nucleolar localization signal element. The tRNA site is built by cysteine 105 and valine 127. Histidine 138 functions as the Proton donor in the catalytic mechanism.

This sequence belongs to the pancreatic ribonuclease family. Homodimer. Interacts with RNH1; inhibiting ANG ribonuclease activity. Interacts with PCNA.

The protein localises to the secreted. The protein resides in the nucleus. It is found in the nucleolus. It localises to the cytoplasm. Its subcellular location is the stress granule. With respect to regulation, has weak tRNA ribonuclease activity by itself due to partial autoinhibition by its C-terminus, which folds into a short alpha-helix that partially occludes the substrate-binding site. In absence of stress, the ribonuclease activity is inhibited by RNH1 in the cytoplasm. In response to stress, dissociates from RNH1 in the cytoplasm and associates with cytoplasmic ribosomes with vacant A-sites: ribosomes directly activate the tRNA ribonuclease activity of ANG by refolding the C-terminal alpha-helix. In response to stress, the angiogenic activity of ANG is inhibited by RNH1 in the nucleus. Its function is as follows. Secreted ribonuclease that can either promote or restrict cell proliferation of target cells, depending on the context. Endocytosed in target cells via its receptor PLXNB2 and translocates to the cytoplasm or nucleus. Under stress conditions, localizes to the cytoplasm and promotes the assembly of stress granules (SGs): specifically cleaves a subset of tRNAs within anticodon loops to produce tRNA-derived stress-induced fragments (tiRNAs), resulting in translation repression and inhibition of cell proliferation. tiRNas also prevent formation of apoptosome, thereby promoting cell survival. Preferentially cleaves RNAs between a pyrimidine and an adenosine residue, suggesting that it cleaves the anticodon loop of tRNA(Ala) (32-UUAGCAU-38) after positions 33 and 36. Cleaves a subset of tRNAs, including tRNA(Ala), tRNA(Glu), tRNA(Gly), tRNA(Lys), tRNA(Val), tRNA(His), tRNA(Asp) and tRNA(Sec). Under growth conditions and in differentiated cells, translocates to the nucleus and stimulates ribosomal RNA (rRNA) transcription, including that containing the initiation site sequences of 45S rRNA, thereby promoting cell growth and proliferation. Angiogenin induces vascularization of normal and malignant tissues via its ability to promote rRNA transcription. Involved in hematopoietic stem and progenitor cell (HSPC) growth and survival by promoting rRNA transcription in growth conditions and inhibiting translation in response to stress, respectively. Mediates the crosstalk between myeloid and intestinal epithelial cells to protect the intestinal epithelial barrier integrity: secreted by myeloid cells and promotes intestinal epithelial cells proliferation and survival. Also mediates osteoclast-endothelial cell crosstalk in growing bone: produced by osteoclasts and protects the neighboring vascular cells against senescence by promoting rRNA transcription. This is Angiogenin (ANG) from Saguinus oedipus (Cotton-top tamarin).